The sequence spans 303 residues: MADKSKFIEYIDEALEKSKETALSHLFFTYQGIPYPITMCTSETFQALDTFEARHDDIVLASYPKCGSNWILHIVSELIYAVSKKKYEYPEFPVLECGDSEKYQRMKGFPSPRILATHLHYDKLPGSIFKNKAKILVIFRNPKDTAVSFFHFHNDVPDIPSYGSWDEFFRQLMKGQVSWGSYFDFAINWNKHLDGDNVKFILYEDLKENLAAGIKQIAEFLGFFLTGEQIQTISVQSTFQAMRAKSQDTHGAVGPFLFRKGEVGDWKNLFGEIQNQEMDEKFKECLAGTSLGAKLKYESYCQG.

65 to 70 contacts 3'-phosphoadenylyl sulfate; that stretch reads KCGSNW. The Proton acceptor role is filled by His-118. 3'-phosphoadenylyl sulfate contacts are provided by residues Arg-140, Ser-148, Tyr-203, 237 to 242, and 259 to 261; these read STFQAM and RKG.

Belongs to the sulfotransferase 1 family.

It is found in the cytoplasm. It localises to the cytosol. The catalysed reaction is thyroxine + 3'-phosphoadenylyl sulfate = thyroxine sulfate + adenosine 3',5'-bisphosphate + H(+). Functionally, sulfotransferase that utilizes 3'-phospho-5'-adenylyl sulfate (PAPS) as sulfonate donor to catalyze the sulfate conjugation of thyroxine. Involved in the metabolism of thyroxine. This is Sulfotransferase 6B1 (SULT6B1) from Pan troglodytes (Chimpanzee).